Here is a 626-residue protein sequence, read N- to C-terminus: Zinc finger protein 471 (626 aa).

A KRAB domain is found at 14–85 (VTFKDVAIDF…TSEMTRSPFS (72 aa)). 15 consecutive C2H2-type zinc fingers follow at residues 206 to 228 (FKCNECDKTFTHSSSLTVHFRIH), 234 to 256 (YACEECGKAFKQRQHLAQHHRTH), 262 to 284 (FECKECRKAFKQSEHLIQHQRIH), 290 to 312 (YKCKECRKAFRQPAHLAQHQRIH), 318 to 340 (YECKECGKAFSDGSSFARHQRCH), 346 to 369 (YECIECGKAFRYNTSFIRHWRSYH), 375 to 397 (FNCIDCGKAFSVHIGLILHRRIH), 403 to 425 (YKCGVCGKTFSSGSSRTVHQRIH), 431 to 453 (YECDICGKDFSHHASLTQHQRVH), 459 to 481 (YECKECGKAFRQNVHLVSHLRIH), 487 to 509 (YECKECGKAFRISSQLATHQRIH), 515 to 537 (YECIECGNAFKQRSHLAQHQKTH), 543 to 565 (YECNECGKAFSQTSNLTQHQRIH), 571 to 593 (YKCTECGKAFSDSSSCAQHQRLH), and 599 to 621 (YQCFECGKAFRRKLSLICHQRSH).

Belongs to the krueppel C2H2-type zinc-finger protein family.

The protein resides in the nucleus. May be involved in transcriptional regulation. In Homo sapiens (Human), this protein is Zinc finger protein 471 (ZNF471).